The following is a 408-amino-acid chain: Histidine--tRNA ligase (408 aa).

This sequence belongs to the class-II aminoacyl-tRNA synthetase family. In terms of assembly, homodimer.

It localises to the cytoplasm. It catalyses the reaction tRNA(His) + L-histidine + ATP = L-histidyl-tRNA(His) + AMP + diphosphate + H(+). This chain is Histidine--tRNA ligase, found in Wolbachia pipientis wMel.